The chain runs to 528 residues: CTD kinase subunit alpha (528 aa).

Over residues 1–15 the composition is skewed to polar residues; it reads MSYNNGNTYSKSYSR. The tract at residues 1–148 is disordered; it reads MSYNNGNTYS…NTSNDIKNGY (148 aa). A Phosphoserine; by autocatalysis modification is found at Ser-14. A Nuclear localization signal motif is present at residues 37–44; the sequence is PPKRIRTD. Residues 45 to 103 are compositionally biased toward polar residues; it reads SGYQSNMDNISSHRVNSNDQPGHTKSRGNNNLSRYNDTSFQTSSRYQGSRYNNNNTSYE. Positions 104–118 are enriched in basic and acidic residues; it reads NRPKSIKRDETKAEF. Over residues 134 to 144 the composition is skewed to polar residues; it reads YNNSSNTSNDI. Residues 183 to 469 form the Protein kinase domain; it reads YLRIMQVGEG…ATEALQSDYF (287 aa). Residues 189–197 and Lys-212 contribute to the ATP site; that span reads VGEGTYGKV. Asp-306 functions as the Proton acceptor in the catalytic mechanism. Residue Thr-338 is modified to Phosphothreonine. The interval 497-528 is disordered; sequence QKRPNILSTNTNNKGNGNSNNNNNNNNDDDDK. The segment covering 504–522 has biased composition (low complexity); the sequence is STNTNNKGNGNSNNNNNNN.

This sequence belongs to the protein kinase superfamily. CMGC Ser/Thr protein kinase family. CDC2/CDKX subfamily. In terms of assembly, CTDK-I consists of three subunits, CTK1, CTK2 and CTK3 (also called alpha, beta and gamma). Interacts directly with the CTK2 and CTK3 subunits, this interaction is required for kinase activity. Interacts with RNA polymerase I. Interacts with SNF1, but only at low glucose concentrations. Interacts with translating ribosomes. Phosphorylated on Thr-338 by CAK1. Phosphorylation is essential for the elevated CTD Ser-2 phosphorylation and required to activate transcription of stationary-phase genes during the diauxic shift.

It localises to the nucleus. Its subcellular location is the nucleolus. The protein localises to the cytoplasm. The catalysed reaction is [DNA-directed RNA polymerase] + ATP = phospho-[DNA-directed RNA polymerase] + ADP + H(+). Functionally, catalytic subunit of the CTDK-I complex, which hyperphosphorylates the C-terminal heptapeptide repeat domain (CTD) of the largest RNA polymerase II subunit. CTDK-I phosphorylates 'Ser-5' if the CTD substrate is not phosphorylated at 'Ser-5', but will phosphorylate 'Ser-2' of a CTD substrate if 'Ser-5' is already phosphorylated. CTDK-I is also more reactive toward substrates that are prephosphorylated at 'Ser-2' or 'Ser-5' compared with an unphosphorylated CTD substrate, therefore efficiently creating doubly phosphorylated CTD repeats. Involved in RNA polymerase II transcriptional elongation, and through PTI1, pre-mRNA 3'-end processing. Participates in both positive and negative regulation of CTD phosphorylation. Required for DNA damage induced transcription, including the expression of the RNR genes, and reprogramming of gene expression upon amino acid starvation. Required for SET2 mediated H3K36 methylation. Also regulates H3K4 methylation. Controls the maintenance of suppressive chromatin in the coding regions of genes by both promoting H3K36 methylation, which leads to histone deacetylation, and catalyzing phosphorylation of the CTD required to localize H3K4 chromatin modification specifically to the 5' ends of genes, thereby creating a boundary for H3K4 methylation that prevents a mark associated with transcriptional initiation from spreading into the bodies of genes. Involved in RNA polymerase I transcription. Involved in telomere maintenance. Acts together with SNF1 to induce GSY2 transcription in response to glucose limitation. Involved in the adaptation to alternative carbon sources, including galactose, glycerol and ethanol, but not raffinose. Required for the integrity of the rDNA locus. Functions in translation elongation by enhancing decoding fidelity. Needed for translational accuracy by phosphorylating RPS2. The sequence is that of CTD kinase subunit alpha (CTK1) from Saccharomyces cerevisiae (strain ATCC 204508 / S288c) (Baker's yeast).